A 277-amino-acid chain; its full sequence is MNPCSTPSLYGVIGYPLGHSLSPLLHNTAFRELGIPGVLLPWSIEPERLPAFIQSVRLLNIRGACVTIPHKQSIIPLLDRVTDRVKALGAANTLYWDGDLLCGDNTDILGFMSPLQADPPSAEQTRVLVLGAGGVARAAVAGLKSLGLNQITITDIVDASSATLAETFDLKTIPWSQRSEVDAHILINTTPLGMKGKFEEESPYPTEALAARQGIAYDIVYTPFVTRFLREARAAGWKTIGGLEMFISQADHQFLTWTGRNLPQAAKQAVIDALTAT.

Shikimate is bound by residues 20-22 (SLS) and T67. The active-site Proton acceptor is the K71. D83 contacts NADP(+). Shikimate is bound by residues N92 and D107. NADP(+) is bound by residues 131–135 (GAGGV) and I219. Y221 is a shikimate binding site. Position 242 (G242) interacts with NADP(+).

The protein belongs to the shikimate dehydrogenase family. In terms of assembly, homodimer.

It carries out the reaction shikimate + NADP(+) = 3-dehydroshikimate + NADPH + H(+). Its pathway is metabolic intermediate biosynthesis; chorismate biosynthesis; chorismate from D-erythrose 4-phosphate and phosphoenolpyruvate: step 4/7. In terms of biological role, involved in the biosynthesis of the chorismate, which leads to the biosynthesis of aromatic amino acids. Catalyzes the reversible NADPH linked reduction of 3-dehydroshikimate (DHSA) to yield shikimate (SA). The polypeptide is Shikimate dehydrogenase (NADP(+)) (Pelobacter propionicus (strain DSM 2379 / NBRC 103807 / OttBd1)).